Here is a 325-residue protein sequence, read N- to C-terminus: Iodotyrosine dehalogenase 1 homolog (325 aa).

The chain crosses the membrane as a helical span at residues 42-62; sequence VLNVLFTLGVILFVIYQVASL. The Cytoplasmic segment spans residues 63-325; that stretch reads LHRMNKRVEK…KPVEHITKLY (263 aa). FMN is bound by residues 135 to 139, 163 to 164, 273 to 275, and Arg-315; these read RRSCR, SV, and VTS.

This sequence belongs to the nitroreductase family. Requires FMN as cofactor. Expressed in body-wall, anal depressor and vulval muscles.

It localises to the membrane. In terms of biological role, may contribute to coordination of muscle contraction as regulatory subunit of the nonessential sup-9 potassium channel complex. May act downstream of sup-10. The sequence is that of Iodotyrosine dehalogenase 1 homolog from Caenorhabditis elegans.